A 567-amino-acid polypeptide reads, in one-letter code: Urease subunit alpha (567 aa).

In terms of domain architecture, Urease spans 129 to 567 (GGIDAHIHFI…LPLAQRYFLF (439 aa)). Ni(2+)-binding residues include His134, His136, and Lys217. Lys217 carries the post-translational modification N6-carboxylysine. His219 is a binding site for substrate. Ni(2+) contacts are provided by His246 and His272. The active-site Proton donor is His320. A Ni(2+)-binding site is contributed by Asp360.

The protein belongs to the metallo-dependent hydrolases superfamily. Urease alpha subunit family. As to quaternary structure, heterotrimer of UreA (gamma), UreB (beta) and UreC (alpha) subunits. Three heterotrimers associate to form the active enzyme. Requires Ni cation as cofactor. Carboxylation allows a single lysine to coordinate two nickel ions.

Its subcellular location is the cytoplasm. The catalysed reaction is urea + 2 H2O + H(+) = hydrogencarbonate + 2 NH4(+). It functions in the pathway nitrogen metabolism; urea degradation; CO(2) and NH(3) from urea (urease route): step 1/1. The polypeptide is Urease subunit alpha (Hahella chejuensis (strain KCTC 2396)).